A 509-amino-acid chain; its full sequence is Maturase K (509 aa).

The protein belongs to the intron maturase 2 family. MatK subfamily.

The protein resides in the plastid. It is found in the chloroplast. Functionally, usually encoded in the trnK tRNA gene intron. Probably assists in splicing its own and other chloroplast group II introns. This chain is Maturase K, found in Eucommia ulmoides (Hardy rubber tree).